We begin with the raw amino-acid sequence, 422 residues long: Serine--tRNA ligase (422 aa).

Position 229-231 (229-231 (TAE)) interacts with L-serine. 260–262 (RAE) contributes to the ATP binding site. Glu-283 is a binding site for L-serine. 347 to 350 (EISS) is an ATP binding site. An L-serine-binding site is contributed by Ser-383.

This sequence belongs to the class-II aminoacyl-tRNA synthetase family. Type-1 seryl-tRNA synthetase subfamily. As to quaternary structure, homodimer. The tRNA molecule binds across the dimer.

The protein resides in the cytoplasm. It carries out the reaction tRNA(Ser) + L-serine + ATP = L-seryl-tRNA(Ser) + AMP + diphosphate + H(+). The catalysed reaction is tRNA(Sec) + L-serine + ATP = L-seryl-tRNA(Sec) + AMP + diphosphate + H(+). The protein operates within aminoacyl-tRNA biosynthesis; selenocysteinyl-tRNA(Sec) biosynthesis; L-seryl-tRNA(Sec) from L-serine and tRNA(Sec): step 1/1. In terms of biological role, catalyzes the attachment of serine to tRNA(Ser). Is also able to aminoacylate tRNA(Sec) with serine, to form the misacylated tRNA L-seryl-tRNA(Sec), which will be further converted into selenocysteinyl-tRNA(Sec). In Heliobacterium modesticaldum (strain ATCC 51547 / Ice1), this protein is Serine--tRNA ligase.